Consider the following 146-residue polypeptide: Copper transporter 5 (146 aa).

Residues 24-44 form a helical membrane-spanning segment; sequence WLSYILTLIACFVFSAFYQYL. Residues 55–74 form a disordered region; the sequence is SSSRRAPPPPRSSSGVSAPL. Residues 101–121 traverse the membrane as a helical segment; sequence LLMLAAMSFNGGVFIAIVVGL.

This sequence belongs to the copper transporter (Ctr) (TC 1.A.56) family. SLC31A subfamily. Highly expressed in leaves and stems and at lower levels in roots and flowers.

It localises to the membrane. Its function is as follows. Involved in the transport of copper. This Arabidopsis thaliana (Mouse-ear cress) protein is Copper transporter 5 (COPT5).